The primary structure comprises 157 residues: Putative electron transport protein YsaA (157 aa).

4Fe-4S ferredoxin-type domains lie at 2 to 32, 48 to 80, 80 to 109, and 112 to 144; these read NRFIIADATKCIGCRTCEVACAVSHHENQDC, KDHCWTTAVACHQCEDAPCANVCPVDAISREHG, GHIFVEQTRCIGCKSCMLACPFGAMEVVSS, and KARAIKCDLCWHRETGPACVEACPTKALQCMDV. 16 residues coordinate [4Fe-4S] cluster: Cys-12, Cys-15, Cys-18, Cys-22, Cys-58, Cys-61, Cys-66, Cys-70, Cys-89, Cys-92, Cys-95, Cys-99, Cys-118, Cys-121, Cys-130, and Cys-134.

This chain is Putative electron transport protein YsaA (ysaA), found in Escherichia coli (strain K12).